A 193-amino-acid chain; its full sequence is ATP-dependent Clp protease proteolytic subunit 1 (193 aa).

The active-site Nucleophile is serine 98. Histidine 123 is a catalytic residue.

Belongs to the peptidase S14 family. As to quaternary structure, fourteen ClpP subunits assemble into 2 heptameric rings which stack back to back to give a disk-like structure with a central cavity, resembling the structure of eukaryotic proteasomes.

It is found in the cytoplasm. It catalyses the reaction Hydrolysis of proteins to small peptides in the presence of ATP and magnesium. alpha-casein is the usual test substrate. In the absence of ATP, only oligopeptides shorter than five residues are hydrolyzed (such as succinyl-Leu-Tyr-|-NHMec, and Leu-Tyr-Leu-|-Tyr-Trp, in which cleavage of the -Tyr-|-Leu- and -Tyr-|-Trp bonds also occurs).. Cleaves peptides in various proteins in a process that requires ATP hydrolysis. Has a chymotrypsin-like activity. Plays a major role in the degradation of misfolded proteins. This Bacillus anthracis protein is ATP-dependent Clp protease proteolytic subunit 1.